The following is a 372-amino-acid chain: Glutamate 5-kinase (372 aa).

Lys-14 provides a ligand contact to ATP. Substrate contacts are provided by Ser-54, Asp-141, and Asn-153. Position 173-174 (173-174 (TD)) interacts with ATP. Residues 280 to 358 (RGTLVLDDGA…ESIVRELGYM (79 aa)) enclose the PUA domain.

This sequence belongs to the glutamate 5-kinase family.

It localises to the cytoplasm. It carries out the reaction L-glutamate + ATP = L-glutamyl 5-phosphate + ADP. It functions in the pathway amino-acid biosynthesis; L-proline biosynthesis; L-glutamate 5-semialdehyde from L-glutamate: step 1/2. Functionally, catalyzes the transfer of a phosphate group to glutamate to form L-glutamate 5-phosphate. This Pseudomonas syringae pv. syringae (strain B728a) protein is Glutamate 5-kinase.